Here is a 209-residue protein sequence, read N- to C-terminus: Ubiquitin-conjugating enzyme E2 S (209 aa).

A UBC core domain is found at 14–160 (QTIRQVMREL…ARMMTEIHAQ (147 aa)). Residue cysteine 98 is the Glycyl thioester intermediate of the active site. Positions 164–209 (CAAGAAGDSKDDDGPSTKKHAGLDKKLQDKKKEKLLKEKKRMLKRL) are disordered. Basic and acidic residues predominate over residues 171-199 (DSKDDDGPSTKKHAGLDKKLQDKKKEKLL). The span at 200–209 (KEKKRMLKRL) shows a compositional bias: basic residues.

This sequence belongs to the ubiquitin-conjugating enzyme family.

It catalyses the reaction S-ubiquitinyl-[E1 ubiquitin-activating enzyme]-L-cysteine + [E2 ubiquitin-conjugating enzyme]-L-cysteine = [E1 ubiquitin-activating enzyme]-L-cysteine + S-ubiquitinyl-[E2 ubiquitin-conjugating enzyme]-L-cysteine.. The protein operates within protein modification; protein ubiquitination. In terms of biological role, catalyzes the covalent attachment of ubiquitin to other proteins. Acts as an essential factor of the anaphase promoting complex/cyclosome (APC/C), a cell cycle-regulated ubiquitin ligase that controls progression through mitosis. Acts by specifically elongating polyubiquitin chains initiated by the E2 enzyme vih/UbcH10 on APC/C substrates, enhancing the degradation of APC/C substrates by the proteasome and promoting mitotic exit. The protein is Ubiquitin-conjugating enzyme E2 S of Drosophila ananassae (Fruit fly).